The following is an 84-amino-acid chain: Large ribosomal subunit protein bL27 (84 aa).

Belongs to the bacterial ribosomal protein bL27 family.

This Campylobacter jejuni subsp. jejuni serotype O:6 (strain 81116 / NCTC 11828) protein is Large ribosomal subunit protein bL27.